The chain runs to 360 residues: Nucleoporin SEH1 (360 aa).

6 WD repeats span residues 10–49, 55–96, 111–152, 160–210, 217–258, and 276–315; these read DHKD…EWHC, THSG…SNDK, DSRT…NLSQ, SCKL…RKYA, TVTD…KELT, and NHNS…NWKC. A Glycyl lysine isopeptide (Lys-Gly) (interchain with G-Cter in SUMO2) cross-link involves residue K12. Phosphoserine is present on S190. A compositionally biased stretch (low complexity) spans 324 to 342; it reads SPVNGSSQQGNSNPSVGSN. Residues 324–360 form a disordered region; that stretch reads SPVNGSSQQGNSNPSVGSNIPSLQNSLNGSSAGRKHS. Polar residues predominate over residues 343-354; it reads IPSLQNSLNGSS.

Belongs to the WD repeat SEC13 family. Component of the Nup107-160 subcomplex of the nuclear pore complex (NPC). The Nup107-160 subcomplex includes NUP160, NUP133, NUP107, NUP98, NUP85, NUP43, NUP37, SEH1 and SEC13. The SEH1 subunit appears to be only weakly associated with the Nup107-160 subcomplex. Component of the GATOR2 subcomplex, composed of MIOS, SEC13, SEH1L, WDR24 and WDR59. The GATOR2 complex interacts with CASTOR1 and CASTOR2; the interaction is negatively regulated by arginine. The GATOR2 complex interacts with SESN1, SESN2 and SESN3; the interaction is negatively regulated by amino acids. SESN1, SESN2 and SESN3 convey leucine availability via direct interaction with SEH1L and WDR24.

Its subcellular location is the chromosome. The protein resides in the centromere. The protein localises to the kinetochore. It localises to the nucleus. It is found in the nuclear pore complex. Its subcellular location is the lysosome membrane. With respect to regulation, the GATOR2 complex is negatively regulated by the upstream amino acid sensors CASTOR1 and SESN2, which sequester the GATOR2 complex in absence of amino acids. In the presence of abundant amino acids, GATOR2 is released from CASTOR1 and SESN2 and activated. In terms of biological role, component of the Nup107-160 subcomplex of the nuclear pore complex (NPC). The Nup107-160 subcomplex is required for the assembly of a functional NPC. The Nup107-160 subcomplex is also required for normal kinetochore microtubule attachment, mitotic progression and chromosome segregation. This subunit plays a role in recruitment of the Nup107-160 subcomplex to the kinetochore. Its function is as follows. As a component of the GATOR2 complex, functions as an activator of the amino acid-sensing branch of the mTORC1 signaling pathway. The GATOR2 complex indirectly activates mTORC1 through the inhibition of the GATOR1 subcomplex. GATOR2 probably acts as an E3 ubiquitin-protein ligase toward GATOR1. In the presence of abundant amino acids, the GATOR2 complex mediates ubiquitination of the NPRL2 core component of the GATOR1 complex, leading to GATOR1 inactivation. In the absence of amino acids, GATOR2 is inhibited, activating the GATOR1 complex. Within the GATOR2 complex, SEC13 and SEH1L are required to stabilize the complex. In Bos taurus (Bovine), this protein is Nucleoporin SEH1 (SEH1L).